Here is a 466-residue protein sequence, read N- to C-terminus: Asparagine--tRNA ligase (466 aa).

The protein belongs to the class-II aminoacyl-tRNA synthetase family. Homodimer.

The protein localises to the cytoplasm. The enzyme catalyses tRNA(Asn) + L-asparagine + ATP = L-asparaginyl-tRNA(Asn) + AMP + diphosphate + H(+). The polypeptide is Asparagine--tRNA ligase (Syntrophobacter fumaroxidans (strain DSM 10017 / MPOB)).